A 92-amino-acid polypeptide reads, in one-letter code: Small ribosomal subunit protein uS19c (92 aa).

This sequence belongs to the universal ribosomal protein uS19 family.

The protein resides in the plastid. It localises to the chloroplast. Functionally, protein S19 forms a complex with S13 that binds strongly to the 16S ribosomal RNA. The sequence is that of Small ribosomal subunit protein uS19c from Staurastrum punctulatum (Green alga).